Here is an 89-residue protein sequence, read N- to C-terminus: UPF0237 protein CPE1496 (89 aa).

The region spanning 4 to 84 is the ACT domain; it reads VITVVGKDKV…ISVQHEDIFN (81 aa).

The protein belongs to the UPF0237 family.

The chain is UPF0237 protein CPE1496 from Clostridium perfringens (strain 13 / Type A).